The primary structure comprises 525 residues: uncharacterized protein (525 aa).

The zn(2)-C6 fungal-type DNA-binding region spans 21–48; it reads CLICRSMRKKCDEVHPQCGRCLKAGKQC.

It localises to the cytoplasm. It is found in the nucleus. This is an uncharacterized protein from Schizosaccharomyces pombe (strain 972 / ATCC 24843) (Fission yeast).